Reading from the N-terminus, the 643-residue chain is Cytoplasmic dynein 1 intermediate chain 1 (643 aa).

2 stretches are compositionally biased toward basic and acidic residues: residues 1 to 13 and 20 to 60; these read MSDK…ELER and QIRE…RETE. Disordered stretches follow at residues 1–65 and 96–123; these read MSDK…LLQS and MSPS…RTLQ. Residue S2 is modified to N-acetylserine. Positions 2–123 are interaction with DCTN1; sequence SDKSDLKAEL…DLGPLTRTLQ (122 aa). S50 and S100 each carry phosphoserine. The segment covering 96-107 has biased composition (low complexity); the sequence is MSPSSKSVSTPS. Phosphothreonine is present on T105. A phosphoserine mark is found at S107 and S111. Positions 145-161 are interaction with DYNLT1; it reads KLGVSKVTQVDFLPREV. A disordered region spans residues 167 to 219; that stretch reads ETQTPLATHQSEEDEEDEEMVEPKVGHDSELENQDKKQETKEAPPRELTEEEK. Phosphothreonine is present on T174. 2 positions are modified to phosphoserine: S177 and S195. Positions 187–219 are enriched in basic and acidic residues; sequence VEPKVGHDSELENQDKKQETKEAPPRELTEEEK. WD repeat units follow at residues 283-332, 336-376, 385-426, 435-475, 480-525, 528-568, and 574-613; these read SKHR…TTPE, HCQS…RTPV, AHTH…TPQE, SKPV…AGIG, GHQG…PLYS, DNAD…EVPT, and EGAY…VPHN. Phosphoserine is present on S633.

It belongs to the dynein intermediate chain family. Homodimer. The cytoplasmic dynein 1 complex consists of two catalytic heavy chains (HCs) and a number of non-catalytic subunits presented by intermediate chains (ICs), light intermediate chains (LICs) and light chains (LCs); the composition seems to vary in respect to the IC, LIC and LC composition. The heavy chain homodimer serves as a scaffold for the probable homodimeric assembly of the respective non-catalytic subunits. The ICs and LICs bind directly to the HC dimer and the LCs assemble on the IC dimer. Isoform 1, isoform 2 and isoform 3 interact with DYNC1H1. Isoform 1, isoform 2 and isoform 3 interact with DYNLT3. Isoform 1, isoform 2 and isoform 3 interact with DYNLT1. Interacts with DCTN1. Interacts with MCRS1; the interaction is required for the proper distribution of centriolar satellites. High levels seen in the brain and testis, while a lower level expression is seen in the liver, spleen, kidney, lung, skeletal muscle and heart.

It localises to the cytoplasm. The protein resides in the chromosome. The protein localises to the centromere. It is found in the kinetochore. Its subcellular location is the cytoskeleton. It localises to the spindle pole. In terms of biological role, acts as one of several non-catalytic accessory components of the cytoplasmic dynein 1 complex that are thought to be involved in linking dynein to cargos and to adapter proteins that regulate dynein function. Cytoplasmic dynein 1 acts as a motor for the intracellular retrograde motility of vesicles and organelles along microtubules. The intermediate chains mediate the binding of dynein to dynactin via its 150 kDa component (p150-glued) DCTN1. May play a role in mediating the interaction of cytoplasmic dynein with membranous organelles and kinetochores. In Rattus norvegicus (Rat), this protein is Cytoplasmic dynein 1 intermediate chain 1 (Dync1i1).